The primary structure comprises 602 residues: Serine/threonine-protein phosphatase 2A 56 kDa regulatory subunit delta isoform (602 aa).

Residues methionine 1–lysine 13 show a composition bias toward basic and acidic residues. A disordered region spans residues methionine 1–lysine 96. Repeat copies occupy residues glutamine 37–proline 38, glutamine 39–proline 40, glutamine 41–proline 42, glutamine 43–proline 44, and glutamine 45–proline 46. The segment at glutamine 37 to proline 52 is 8 X 2 AA approximate tandem repeats of Q-P. A compositionally biased stretch (low complexity) spans proline 46–serine 55. The 6; approximate repeat unit spans residues glutamine 47–alanine 48. The stretch at glutamine 49–serine 50 is one 7; approximate repeat. Repeat unit 8 spans residues glutamine 51–proline 52. Threonine 63 carries the post-translational modification Phosphothreonine. A phosphoserine mark is found at serine 88, serine 89, and serine 90. The SH3-binding; class I motif lies at arginine 523–proline 530. The Nuclear localization signal motif lies at lysine 548–glutamate 565. Phosphoserine is present on residues serine 573 and serine 598.

The protein belongs to the phosphatase 2A regulatory subunit B56 family. As to quaternary structure, PP2A consists of a common heterodimeric core enzyme, composed of a 36 kDa catalytic subunit (subunit C) and a 65 kDa constant regulatory subunit (PR65 or subunit A), that associates with a variety of regulatory subunits. Proteins that associate with the core dimer include three families of regulatory subunits B (the R2/B/PR55/B55, R3/B''/PR72/PR130/PR59 and R5/B'/B56 families), the 48 kDa variable regulatory subunit, viral proteins, and cell signaling molecules. Interacts with the PP2A A subunit PPP2R1A. Interacts with SGO1. Interacts with ADCY8. Isoform Delta-2 is widely expressed. Isoform Delta-1 is highly expressed in brain.

It is found in the cytoplasm. It localises to the nucleus. Functionally, the B regulatory subunit might modulate substrate selectivity and catalytic activity, and might also direct the localization of the catalytic enzyme to a particular subcellular compartment. The sequence is that of Serine/threonine-protein phosphatase 2A 56 kDa regulatory subunit delta isoform (PPP2R5D) from Homo sapiens (Human).